The following is an 850-amino-acid chain: PH domain-containing protein YHR131C (850 aa).

The PH domain maps to 194-306; sequence RIHSDLVHRS…MYLSIGISVS (113 aa). The span at 324-338 shows a compositional bias: basic residues; that stretch reads RRRRRRRRRRRRHTH. 5 disordered regions span residues 324-348, 406-428, 451-494, 583-659, and 793-850; these read RRRR…GSFS, SAAS…SGCS, SSRT…GVPV, EASI…TDDS, and TTKD…QITA. Residues 406–416 show a composition bias toward low complexity; that stretch reads SAASGESSDNS. Over residues 417–428 the composition is skewed to polar residues; the sequence is TLGSTRSLSGCS. A compositionally biased stretch (basic and acidic residues) spans 479 to 489; that stretch reads HHESSGGDHPE. A compositionally biased stretch (polar residues) spans 605 to 619; that stretch reads ESATDLSQSSRSLCL. Composition is skewed to acidic residues over residues 626–658 and 799–850; these read INDD…DTDD and DHGE…QITA.

The protein localises to the cytoplasm. This chain is PH domain-containing protein YHR131C, found in Saccharomyces cerevisiae (strain ATCC 204508 / S288c) (Baker's yeast).